We begin with the raw amino-acid sequence, 315 residues long: Salivary protein SG34 (315 aa).

The first 20 residues, 1-20, serve as a signal peptide directing secretion; that stretch reads MPVSYDFVILLALFIVLARS. Residues 98 to 161 are a coiled coil; it reads NAEVELLRES…QEEIEQQTKQ (64 aa).

Functionally, (Microbial infection) Modulates replication of duck Tembusu virus in salivary glands and virus release into the saliva, probably via the regulation of antimicrobial peptides expression in response to duck Tembusu virus infection. The protein is Salivary protein SG34 of Aedes albopictus (Asian tiger mosquito).